We begin with the raw amino-acid sequence, 504 residues long: Patatin-like phospholipase domain-containing protein 2 (504 aa).

Residues Met-1–Trp-8 lie on the Cytoplasmic side of the membrane. A helical membrane pass occupies residues Asn-9–Leu-29. Residues Ile-10–Lys-179 form the PNPLA domain. Positions Gly-14 to Gly-19 match the GXGXXG motif. Topologically, residues Arg-30 to His-42 are extracellular. An N-linked (GlcNAc...) asparagine glycan is attached at Asn-39. A helical membrane pass occupies residues Ile-43–Gly-63. The short motif at Gly-45 to Gly-49 is the GXSXG element. Ser-47 (nucleophile) is an active-site residue. Residues Glu-64–Glu-137 are Cytoplasmic-facing. Lys-92 participates in a covalent cross-link: Glycyl lysine isopeptide (Lys-Gly) (interchain with G-Cter in ubiquitin). The helical transmembrane segment at Leu-138–Ser-158 threads the bilayer. The Extracellular portion of the chain corresponds to Leu-159–Arg-329. Asp-166 functions as the Proton acceptor in the catalytic mechanism. The DGA/G signature appears at Asp-166–Gly-168. The helical transmembrane segment at Leu-330–Ile-350 threads the bilayer. Topologically, residues Arg-351 to Leu-504 are cytoplasmic. A Phosphoserine; in vitro modification is found at Ser-372. A Phosphoserine; by PKA and FAM20C modification is found at Ser-404. A Phosphoserine modification is found at Ser-428. Residues Ala-463 to Ala-492 form a disordered region.

Interacts with ABHD5; this association stimulates PNPLA2 triglyceride hydrolase activity. Interacts with SERPINF1; this interaction stimulates the phospholipase A2 activity of PNPLA2. Despite a colocalization in lipid droplets, it probably does not interact with PLIN. Interacts with PLIN5; prevents interaction with ABHD5. Interacts with FAF2. In terms of processing, phosphorylation at Ser-404 by PKA is increased during fasting and moderate intensity exercise, and moderately increases lipolytic activity. Phosphorylation at Ser-404 is increased upon beta-adrenergic stimulation. Post-translationally, ubiquitinated by PEX2 in response to reactive oxygen species (ROS), leading to its degradation. Ubiquitination is stimulated by LDAH. As to expression, highest expression in adipose tissue. Also detected in heart, skeletal muscle, and portions of the gastrointestinal tract. Detected in normal retina and retinoblastoma cells. Detected in retinal pigment epithelium and, at lower intensity, in the inner segments of photoreceptors and in the ganglion cell layer of the neural retina (at protein level).

The protein resides in the lipid droplet. It is found in the cell membrane. It localises to the cytoplasm. The enzyme catalyses a triacylglycerol + H2O = a diacylglycerol + a fatty acid + H(+). It catalyses the reaction a triacylglycerol + H2O = a 1,2-diacylglycerol + a fatty acid + H(+). The catalysed reaction is a triacylglycerol + H2O = a 1,3-diacylglycerol + a fatty acid + H(+). It carries out the reaction a triacyl-sn-glycerol + H2O = a 1,3-diacyl-sn-glycerol + a fatty acid + H(+). The enzyme catalyses a triacyl-sn-glycerol + H2O = a 2,3-diacyl-sn-glycerol + a fatty acid + H(+). It catalyses the reaction a 1-acylglycerol + a 1,3-diacylglycerol = a triacylglycerol + glycerol. The catalysed reaction is a 1-acylglycerol + a 1,2-diacylglycerol = a triacylglycerol + glycerol. It carries out the reaction 2 a 1-acylglycerol = a 1,2-diacylglycerol + glycerol. The enzyme catalyses a triacylglycerol + all-trans-retinol = an all-trans-retinyl ester + a diacylglycerol. It catalyses the reaction 1,2-di-(9Z-octadecenoyl)-glycerol + (9Z)-octadecenoate + H(+) = 1,2,3-tri-(9Z-octadecenoyl)-glycerol + H2O. The catalysed reaction is 1,2,3-tri-(9Z-octadecenoyl)-glycerol + H2O = 1,3-di-(9Z-octadecenoyl)-glycerol + (9Z)-octadecenoate + H(+). It carries out the reaction 1-(9Z-octadecenoyl)-glycerol + 1,3-di-(9Z-octadecenoyl)-glycerol = 1,2,3-tri-(9Z-octadecenoyl)-glycerol + glycerol. The enzyme catalyses 1-(9Z-octadecenoyl)-glycerol + 1,2-di-(9Z-octadecenoyl)-glycerol = 1,2,3-tri-(9Z-octadecenoyl)-glycerol + glycerol. It catalyses the reaction 2 1-(9Z-octadecenoyl)-glycerol = 1,2-di-(9Z-octadecenoyl)-glycerol + glycerol. The catalysed reaction is 1,2,3-tri-(9Z-octadecenoyl)-glycerol + all-trans-retinol = all-trans-retinyl 9Z-octadecenoate + di-(9Z)-octadecenoylglycerol. It carries out the reaction 1,2,3-tri-(9Z)-hexadecenoylglycerol + H2O = 1,3-di-(9Z)-hexadecenoylglycerol + (9Z)-hexadecenoate + H(+). The enzyme catalyses 1,2,3-tri-(9Z,12Z)-octadecadienoylglycerol + H2O = 1,3-di-(9Z,12Z)-octadecadienoylglycerol + (9Z,12Z)-octadecadienoate + H(+). It catalyses the reaction 1,2,3-tri-(9Z,12Z,15Z)-octadecatrienoylglycerol + H2O = 1,3-di-(9Z,12Z,15Z)-octadecatrienoylglycerol + (9Z,12Z,15Z)-octadecatrienoate + H(+). The catalysed reaction is 1,3-di-(9Z)-octadecenoyl-2-hexadecanoylglycerol + H2O = 1,3-di-(9Z-octadecenoyl)-glycerol + hexadecanoate + H(+). It carries out the reaction 1,2-di-(9Z)-octadecenoyl-3-hexadecanoyl-sn-glycerol + H2O = 1-(9Z)-octadecenoyl-3-hexadecanoyl-sn-glycerol + (9Z)-octadecenoate + H(+). The enzyme catalyses 1-hexadecanoyl-2,3-di-(9Z)-octadecenoyl-sn-glycerol + H2O = 1-hexadecanoyl-3-(9Z)-octadecenoyl-sn-glycerol + (9Z)-octadecenoate + H(+). It catalyses the reaction 1,2,3-tri-(9Z-octadecenoyl)-glycerol + H2O = 2,3-di-(9Z)-octadecenoyl-sn-glycerol + (9Z)-octadecenoate + H(+). The catalysed reaction is 1,2,3-tri-(9Z)-hexadecenoylglycerol + H2O = 2,3-di-(9Z)-hexadecenoyl-sn-glycerol + (9Z)-hexadecenoate + H(+). It carries out the reaction 1,2,3-tri-(9Z,12Z)-octadecadienoylglycerol + H2O = 2,3-di-(9Z,12Z)-octadecadienoyl-sn-glycerol + (9Z,12Z)-octadecadienoate + H(+). The enzyme catalyses 1,2,3-tri-(9Z,12Z,15Z)-octadecatrienoylglycerol + H2O = 2,3-di-(9Z,12Z,15Z)-octadecatrienoyl-sn-glycerol + (9Z,12Z,15Z)-octadecatrienoate + H(+). It catalyses the reaction 1,3-di-(9Z)-octadecenoyl-2-hexadecanoylglycerol + H2O = 2-hexadecanoyl-3-(9Z)-octadecenoyl-sn-glycerol + (9Z)-octadecenoate + H(+). The catalysed reaction is 1-hexadecanoyl-2,3-di-(9Z)-octadecenoyl-sn-glycerol + H2O = 2,3-di-(9Z)-octadecenoyl-sn-glycerol + hexadecanoate + H(+). It carries out the reaction 1,2-di-(9Z)-octadecenoyl-3-hexadecanoyl-sn-glycerol + H2O = 2-(9Z-octadecenoyl)-3-hexadecanoyl-sn-glycerol + (9Z)-octadecenoate + H(+). The enzyme catalyses a 1,2-diacyl-sn-glycero-3-phosphocholine + H2O = a 1-acyl-sn-glycero-3-phosphocholine + a fatty acid + H(+). It catalyses the reaction 1,2,3-tri-(9Z-octadecenoyl)-glycerol + 9-hydroxy-octadecanoate = 9-(9Z-octadecenoyloxy)-octadecanoate + 2,3-di-(9Z)-octadecenoyl-sn-glycerol. The catalysed reaction is 1-hexadecanoyl-2,3-di-(9Z)-octadecenoyl-sn-glycerol + 9-hydroxy-octadecanoate = 9-hexadecanoyloxy-octadecanoate + 2,3-di-(9Z)-octadecenoyl-sn-glycerol. It carries out the reaction 1,2,3-tri-(10Z)-heptadecenoylglycerol + 9-hydroxy-octadecanoate = 2,3-di-(10Z-heptadecenoyl)-sn-glycerol + 9-(10Z-heptadecenoyloxy)-octadecanoate. The enzyme catalyses 1,2,3-tri-(9Z,12Z)-octadecadienoylglycerol + 9-hydroxy-octadecanoate = 2,3-di-(9Z,12Z)-octadecadienoyl-sn-glycerol + 9-(9Z,12Z-octadecadienoyloxy)-octadecanoate. It catalyses the reaction 1,2,3-tri-(9Z)-hexadecenoylglycerol + 9-hydroxy-octadecanoate = 2,3-di-(9Z)-hexadecenoyl-sn-glycerol + 9-(9Z-hexadecenoyloxy)-octadecanoate. The catalysed reaction is 9-hydroxy-octadecanoate + 1,2-di-(9Z-octadecenoyl)-sn-glycerol = 9-(9Z-octadecenoyloxy)-octadecanoate + 2-(9Z-octadecenoyl)-glycerol. It carries out the reaction 1-hexadecanoyl-2,3-di-(9Z)-octadecenoyl-sn-glycerol + 9-hydroxy-octadecanoate = 1-hexadecanoyl-3-(9Z)-octadecenoyl-sn-glycerol + 9-(9Z-octadecenoyloxy)-octadecanoate. The protein operates within glycerolipid metabolism; triacylglycerol degradation. With respect to regulation, the triglyceride lipase activity is inhibited by BEL ((E)-6-(bromomethylene)-3-(1-naphthalenyl)-2H-tetrahydropyran-2-one), a suicide substrate inhibitor. No differences in the acylglycerol transacylase was detected in the presence or absence of ATP. Functionally, catalyzes the initial step in triglyceride hydrolysis in adipocyte and non-adipocyte lipid droplets. Exhibits a strong preference for the hydrolysis of long-chain fatty acid esters at the sn-2 position of the glycerol backbone and acts coordinately with LIPE/HLS and DGAT2 within the lipolytic cascade. Also possesses acylglycerol transacylase and phospholipase A2 activities. Transfers fatty acid from triglyceride to retinol, hydrolyzes retinylesters, and generates 1,3-diacylglycerol from triglycerides. Regulates adiposome size and may be involved in the degradation of adiposomes. Catalyzes the formation of an ester bond between hydroxy fatty acids and fatty acids derived from triglycerides or diglycerides to generate fatty acid esters of hydroxy fatty acids (FAHFAs) in adipocytes. Acts antagonistically with LDAH in regulation of cellular lipid stores. Inhibits LDAH-stimulated lipid droplet fusion. May play an important role in energy homeostasis. May play a role in the response of the organism to starvation, enhancing hydrolysis of triglycerides and providing free fatty acids to other tissues to be oxidized in situations of energy depletion. The chain is Patatin-like phospholipase domain-containing protein 2 from Homo sapiens (Human).